The following is a 593-amino-acid chain: DNA primase (593 aa).

The CHC2-type zinc finger occupies 40–64 (CPFHHEKTPSFTVSQKKQFYHCFGC). One can recognise a Toprim domain in the interval 260 to 342 (KQLLVVEGYM…GRQLKFIFLP (83 aa)). Residues Glu266, Asp310, and Asp312 each coordinate Mg(2+).

This sequence belongs to the DnaG primase family. As to quaternary structure, monomer. Interacts with DnaB. It depends on Zn(2+) as a cofactor. Requires Mg(2+) as cofactor.

It carries out the reaction ssDNA + n NTP = ssDNA/pppN(pN)n-1 hybrid + (n-1) diphosphate.. Functionally, RNA polymerase that catalyzes the synthesis of short RNA molecules used as primers for DNA polymerase during DNA replication. This chain is DNA primase, found in Haemophilus influenzae (strain ATCC 51907 / DSM 11121 / KW20 / Rd).